A 415-amino-acid chain; its full sequence is Histidine--tRNA ligase (415 aa).

Belongs to the class-II aminoacyl-tRNA synthetase family. Homodimer.

Its subcellular location is the cytoplasm. The catalysed reaction is tRNA(His) + L-histidine + ATP = L-histidyl-tRNA(His) + AMP + diphosphate + H(+). The protein is Histidine--tRNA ligase of Rickettsia canadensis (strain McKiel).